The primary structure comprises 446 residues: N-succinylarginine dihydrolase (446 aa).

Residues 19–28, Asn110, and 137–138 contribute to the substrate site; these read AGLSFGNVAS and HR. Glu174 is an active-site residue. Arg213 contributes to the substrate binding site. His249 is an active-site residue. The substrate site is built by Asp251 and Asn364. Cys370 serves as the catalytic Nucleophile.

Belongs to the succinylarginine dihydrolase family. In terms of assembly, homodimer.

The catalysed reaction is N(2)-succinyl-L-arginine + 2 H2O + 2 H(+) = N(2)-succinyl-L-ornithine + 2 NH4(+) + CO2. The protein operates within amino-acid degradation; L-arginine degradation via AST pathway; L-glutamate and succinate from L-arginine: step 2/5. Functionally, catalyzes the hydrolysis of N(2)-succinylarginine into N(2)-succinylornithine, ammonia and CO(2). The chain is N-succinylarginine dihydrolase from Burkholderia lata (strain ATCC 17760 / DSM 23089 / LMG 22485 / NCIMB 9086 / R18194 / 383).